A 676-amino-acid chain; its full sequence is Ion-translocating oxidoreductase complex subunit C (676 aa).

4Fe-4S ferredoxin-type domains are found at residues 369-397 (GEPQ…QQLY) and 407-436 (KATT…VQYF). Residues Cys377, Cys380, Cys383, Cys387, Cys416, Cys419, Cys422, and Cys426 each coordinate [4Fe-4S] cluster. A disordered region spans residues 600–652 (ARKLEQQQANAEPEQQVDPRKAAVEAAIARAKARKLEQQQANAEPEEQVDPRK). A compositionally biased stretch (low complexity) spans 605 to 615 (QQQANAEPEQQ).

This sequence belongs to the 4Fe4S bacterial-type ferredoxin family. RnfC subfamily. In terms of assembly, the complex is composed of six subunits: RsxA, RsxB, RsxC, RsxD, RsxE and RsxG. It depends on [4Fe-4S] cluster as a cofactor.

The protein resides in the cell inner membrane. Its function is as follows. Part of a membrane-bound complex that couples electron transfer with translocation of ions across the membrane. Required to maintain the reduced state of SoxR. This chain is Ion-translocating oxidoreductase complex subunit C, found in Escherichia coli (strain SMS-3-5 / SECEC).